A 168-amino-acid polypeptide reads, in one-letter code: Small ribosomal subunit protein uS5 (168 aa).

In terms of domain architecture, S5 DRBM spans 17–80 (IEDQLVAVNR…EDGKKKMINV (64 aa)).

The protein belongs to the universal ribosomal protein uS5 family. In terms of assembly, part of the 30S ribosomal subunit. Contacts proteins S4 and S8.

With S4 and S12 plays an important role in translational accuracy. In terms of biological role, located at the back of the 30S subunit body where it stabilizes the conformation of the head with respect to the body. The protein is Small ribosomal subunit protein uS5 of Lactobacillus acidophilus (strain ATCC 700396 / NCK56 / N2 / NCFM).